The following is a 508-amino-acid chain: GATA zinc finger domain-containing protein 13 (508 aa).

2 disordered regions span residues 20–51 (YSKN…INNN) and 203–296 (MSII…PEIE). A compositionally biased stretch (low complexity) spans 23 to 51 (NNNNNNNNNNNNNINNNNNNNNNNNINNN). Polar residues predominate over residues 203–224 (MSIIPSDNFPTPQLPLETNTDL). Residues 225-247 (NNTSDCSSTTFSSPPSSAFNSPN) are compositionally biased toward low complexity. Positions 248–266 (LQNDYTQPQNQKSQSSTIV) are enriched in polar residues. Residues 269–279 (NSSKSKSKNNK) show a composition bias toward basic residues. Residues 327-354 (CSICKIKCSIYWRRILINEVRTSVCNAC) form a GATA-type zinc finger. The stretch at 356–433 (LRTMKKTKKE…NNNNNNNNNN (78 aa)) forms a coiled coil. Residues 399–482 (TTTTTTTTTS…NNNNNDNYND (84 aa)) show a composition bias toward low complexity. The tract at residues 399-484 (TTTTTTTTTS…NNNDNYNDSI (86 aa)) is disordered.

The protein is GATA zinc finger domain-containing protein 13 (gtaM) of Dictyostelium discoideum (Social amoeba).